The primary structure comprises 530 residues: Growth-regulating factor 1 (530 aa).

The tract at residues 1–41 is disordered; it reads MDLGVRVSGHETVSSPGQTELGSGFSNKQERSGFDGEDCWR. Positions 11-27 are enriched in polar residues; the sequence is ETVSSPGQTELGSGFSN. The span at 28 to 41 shows a compositional bias: basic and acidic residues; that stretch reads KQERSGFDGEDCWR. The region spanning 133–168 is the QLQ domain; it reads PFSLTQWAELEQQALIYKYITANVPVPSSLLLSLKK. The WRC domain maps to 196 to 240; sequence DPEPGRCRRTDGKKWRCSRDAVPDQKYCERHINRGRHRSRKPVEG. 2 short sequence motifs (bipartite nuclear localization signal) span residues 201-211 and 229-236; these read RCRRTDGKKWR and RGRHRSRK. 2 disordered regions span residues 223–250 and 485–530; these read CERHINRGRHRSRKPVEGQNGHNTNAAA and STFG…APSL. The span at 485–508 shows a compositional bias: low complexity; sequence STFGSLSNSSSASSTIIGDNNNKN. The segment covering 519 to 530 has biased composition (polar residues); it reads TLMNTSATAPSL.

The protein belongs to the GRF family. Interacts with GIF1 and GIF2. Strongly expressed in actively growing and developing tissues, such as roots, upper stems, and shoot tips containing the shoot apical meristem (SAM) and flower buds. Also expressed in mature flowers, but weakly expressed in mature stems and leaves.

Its subcellular location is the nucleus. Functionally, transcription activator that plays a role in the regulation of cell expansion in leaf and cotyledons tissues. Component of a network formed by miR396, the GRFs and their interacting factors (GIFs) acting in the regulation of meristem function, at least partially through the control of cell proliferation. microRNA396-GRF1/GRF3 regulatory module acts as a developmental regulator in the reprogramming of root cells during cyst nematode infection, leading to the formation of the syncytium. The protein is Growth-regulating factor 1 (GRF1) of Arabidopsis thaliana (Mouse-ear cress).